The following is a 214-amino-acid chain: tRNA (guanine-N(7)-)-methyltransferase (214 aa).

4 residues coordinate S-adenosyl-L-methionine: Glu-44, Asp-69, Asp-96, and Asp-118. Asp-118 is an active-site residue. Lys-122 lines the substrate pocket. Residues 124-129 are interaction with RNA; the sequence is KHEKRR. Residues Asp-154 and 191 to 194 contribute to the substrate site; that span reads TEYE.

It belongs to the class I-like SAM-binding methyltransferase superfamily. TrmB family.

It carries out the reaction guanosine(46) in tRNA + S-adenosyl-L-methionine = N(7)-methylguanosine(46) in tRNA + S-adenosyl-L-homocysteine. It participates in tRNA modification; N(7)-methylguanine-tRNA biosynthesis. Functionally, catalyzes the formation of N(7)-methylguanine at position 46 (m7G46) in tRNA. The chain is tRNA (guanine-N(7)-)-methyltransferase from Enterococcus faecalis (strain ATCC 700802 / V583).